The primary structure comprises 552 residues: Membrane protein insertase YidC (552 aa).

The helical transmembrane segment at 3-23 (IKRTVLWVIFFMSAVMLFDNW) threads the bilayer. The disordered stretch occupies residues 35–59 (PSATPTKTVGSAAPGTTTPGTQPAD). The span at 42–59 (TVGSAAPGTTTPGTQPAD) shows a compositional bias: low complexity. Helical transmembrane passes span 364 to 384 (WGWS…PLSA), 430 to 450 (FGGC…YWVL), and 504 to 524 (MMFM…GLVL).

This sequence belongs to the OXA1/ALB3/YidC family. Type 1 subfamily. In terms of assembly, interacts with the Sec translocase complex via SecD. Specifically interacts with transmembrane segments of nascent integral membrane proteins during membrane integration.

It localises to the cell inner membrane. In terms of biological role, required for the insertion and/or proper folding and/or complex formation of integral membrane proteins into the membrane. Involved in integration of membrane proteins that insert both dependently and independently of the Sec translocase complex, as well as at least some lipoproteins. Aids folding of multispanning membrane proteins. The sequence is that of Membrane protein insertase YidC from Paraburkholderia phytofirmans (strain DSM 17436 / LMG 22146 / PsJN) (Burkholderia phytofirmans).